Reading from the N-terminus, the 462-residue chain is Bifunctional protein GlmU (462 aa).

The interval 1 to 239 (MTESVSKPVR…EASVQGVNAQ (239 aa)) is pyrophosphorylase. UDP-N-acetyl-alpha-D-glucosamine is bound by residues 17-20 (LAAG), Lys31, Gln84, and 89-90 (GT). A Mg(2+)-binding site is contributed by Asp114. Gly150, Glu165, Asn180, and Asn237 together coordinate UDP-N-acetyl-alpha-D-glucosamine. Asn237 contacts Mg(2+). A linker region spans residues 240-260 (AELAAAEAVWQQNRRKALMVD). Residues 261-462 (GVTMPAPDTV…QKDKKKDKKA (202 aa)) form an N-acetyltransferase region. Residues Arg326 and Lys344 each coordinate UDP-N-acetyl-alpha-D-glucosamine. Catalysis depends on His356, which acts as the Proton acceptor. UDP-N-acetyl-alpha-D-glucosamine contacts are provided by Tyr359 and Asn370. Acetyl-CoA is bound by residues Ala373, 379 to 380 (NY), Ser398, Ser416, and Arg433.

The protein in the N-terminal section; belongs to the N-acetylglucosamine-1-phosphate uridyltransferase family. This sequence in the C-terminal section; belongs to the transferase hexapeptide repeat family. As to quaternary structure, homotrimer. Mg(2+) serves as cofactor.

It localises to the cytoplasm. It carries out the reaction alpha-D-glucosamine 1-phosphate + acetyl-CoA = N-acetyl-alpha-D-glucosamine 1-phosphate + CoA + H(+). The catalysed reaction is N-acetyl-alpha-D-glucosamine 1-phosphate + UTP + H(+) = UDP-N-acetyl-alpha-D-glucosamine + diphosphate. Its pathway is nucleotide-sugar biosynthesis; UDP-N-acetyl-alpha-D-glucosamine biosynthesis; N-acetyl-alpha-D-glucosamine 1-phosphate from alpha-D-glucosamine 6-phosphate (route II): step 2/2. It functions in the pathway nucleotide-sugar biosynthesis; UDP-N-acetyl-alpha-D-glucosamine biosynthesis; UDP-N-acetyl-alpha-D-glucosamine from N-acetyl-alpha-D-glucosamine 1-phosphate: step 1/1. The protein operates within bacterial outer membrane biogenesis; LPS lipid A biosynthesis. Catalyzes the last two sequential reactions in the de novo biosynthetic pathway for UDP-N-acetylglucosamine (UDP-GlcNAc). The C-terminal domain catalyzes the transfer of acetyl group from acetyl coenzyme A to glucosamine-1-phosphate (GlcN-1-P) to produce N-acetylglucosamine-1-phosphate (GlcNAc-1-P), which is converted into UDP-GlcNAc by the transfer of uridine 5-monophosphate (from uridine 5-triphosphate), a reaction catalyzed by the N-terminal domain. In Caulobacter vibrioides (strain ATCC 19089 / CIP 103742 / CB 15) (Caulobacter crescentus), this protein is Bifunctional protein GlmU.